A 237-amino-acid polypeptide reads, in one-letter code: uncharacterized protein (237 aa).

50–57 serves as a coordination point for ATP; the sequence is APPGTGKS.

This is an uncharacterized protein from Escherichia coli (strain K12).